The chain runs to 493 residues: Transcript termination protein A18 (493 aa).

Residues 100 to 256 (MIELKRPLYI…NSIINIAKLS (157 aa)) enclose the Helicase ATP-binding domain. Residue 113 to 120 (LACGFGKT) participates in ATP binding. The DESH box motif lies at 206 to 209 (DESH).

Belongs to the helicase family. Poxviruses subfamily. Interacts with G2. Might be part of a transcription complex composed at least of G2, A18, and H5.

It is found in the virion. In terms of biological role, DNA helicase which seems to act as a postreplicative transcription termination factor. Involved in ATP-dependent release of nascent RNA. Forms a stable complex with single-stranded DNA, and to a lesser extent RNA. In Cowpox virus (strain GRI-90 / Grishak) (CPV), this protein is Transcript termination protein A18.